A 512-amino-acid chain; its full sequence is Protein male-specific lethal-3 (512 aa).

The Chromo domain maps to 11–90 (FHKGEIVLCY…QLQRELAEAA (80 aa)). Positions 98-175 (YSYKGTPDKP…DGRLKGNRGR (78 aa)) are disordered. The span at 149–169 (RTRDNSGGKRKEKPPSGDGRL) shows a compositional bias: basic and acidic residues. The 305-residue stretch at 196–500 (QEDRIMMRVS…STALPQEDLQ (305 aa)) folds into the MRG domain.

In terms of assembly, component of the male-specific lethal (MSL) histone acetyltransferase complex, composed of mof, mle, msl-1, msl-2 and msl-3 proteins, as well as roX1 and roX2 non-coding RNAs. Component of a maternal MSL subcomplex composed of mof, msl-1 and msl-3. Post-translationally, ubiquitinated by msl-2.

Its subcellular location is the nucleus. It is found in the chromosome. Its function is as follows. Component of the male-specific lethal (MSL) histone acetyltransferase complex, a multiprotein complex essential for elevating transcription of the single X chromosome in the male (X chromosome dosage compensation). The MSL complex specifically associates with the single X chromosome in males and mediates formation of H4K16ac, promoting a two-fold activation of X chromosome. Acts as a histone reader that specifically recognizes and binds histone H3 trimethylated at 'Lys-36' (H3K36me3) and histone H4 monomethylated at 'Lys-20' (H4K20me1). Within the MSL complex, mediates the spreading of the MSL complex from initiation sites on the male X chromosome to flanking chromatin. Following initial recruitment of the MSL complex to male X chromosome by msl-2, msl-3 binds H3K36me3 and promotes spreading of the MSL complex in cis. In addition to its role in dosage compensation in males, promotes germline stem cell differentiation in females: recognizes and binds H3K36me3, promoting recruitment of the ATAC complex and transcription of genes, such as RpS19b. The sequence is that of Protein male-specific lethal-3 from Drosophila melanogaster (Fruit fly).